We begin with the raw amino-acid sequence, 396 residues long: Elongation factor Tu (396 aa).

Positions 10-206 (KPHVNIGTIG…AVDAYIPEPE (197 aa)) constitute a tr-type G domain. The segment at 19 to 26 (GHVDHGKT) is G1. Position 19–26 (19–26 (GHVDHGKT)) interacts with GTP. Thr-26 is a Mg(2+) binding site. The interval 60 to 64 (GITIS) is G2. A G3 region spans residues 81-84 (DCPG). GTP contacts are provided by residues 81 to 85 (DCPGH) and 136 to 139 (NKVD). Residues 136 to 139 (NKVD) form a G4 region. Positions 174-176 (SAL) are G5.

It belongs to the TRAFAC class translation factor GTPase superfamily. Classic translation factor GTPase family. EF-Tu/EF-1A subfamily. Monomer.

Its subcellular location is the cytoplasm. It catalyses the reaction GTP + H2O = GDP + phosphate + H(+). In terms of biological role, GTP hydrolase that promotes the GTP-dependent binding of aminoacyl-tRNA to the A-site of ribosomes during protein biosynthesis. The sequence is that of Elongation factor Tu from Magnetococcus marinus (strain ATCC BAA-1437 / JCM 17883 / MC-1).